Reading from the N-terminus, the 177-residue chain is Cytidylate kinase (177 aa).

8–16 (GPPGGGKTT) lines the ATP pocket.

It belongs to the cytidylate kinase family. Type 2 subfamily.

Its subcellular location is the cytoplasm. The enzyme catalyses CMP + ATP = CDP + ADP. The catalysed reaction is dCMP + ATP = dCDP + ADP. The protein is Cytidylate kinase of Staphylothermus marinus (strain ATCC 43588 / DSM 3639 / JCM 9404 / F1).